The following is a 412-amino-acid chain: Putative competence-damage inducible protein (412 aa).

Belongs to the CinA family.

In Bacillus cereus (strain AH187), this protein is Putative competence-damage inducible protein.